The primary structure comprises 446 residues: Serine decarboxylase 3 (446 aa).

His162 contacts substrate. Residue Lys274 is modified to N6-(pyridoxal phosphate)lysine.

Belongs to the group II decarboxylase family. The cofactor is pyridoxal 5'-phosphate.

It catalyses the reaction L-serine + H(+) = ethanolamine + CO2. In terms of biological role, catalyzes the biosynthesis of ethanolamine from serine. Decarboxylation of free serine is the major source of ethanolamine production in plants and ethanolamine metabolism is crucial for the synthesis of choline, phosphatidylethanolamine (PE) and phosphatidylcholine (PC), and thus for plant growth. The chain is Serine decarboxylase 3 from Oryza sativa subsp. japonica (Rice).